The sequence spans 633 residues: Chaperone protein HtpG (633 aa).

Positions 1 to 341 (MTAPHETMSF…SADLPLNVSR (341 aa)) are a; substrate-binding. A b region spans residues 342-562 (ELLQESRDVK…EGDMSGYLQR (221 aa)). The c stretch occupies residues 563–633 (LLKQAGQKAP…YVQRVNKLLA (71 aa)).

It belongs to the heat shock protein 90 family. In terms of assembly, homodimer.

The protein localises to the cytoplasm. Its function is as follows. Molecular chaperone. Has ATPase activity. This is Chaperone protein HtpG from Cupriavidus taiwanensis (strain DSM 17343 / BCRC 17206 / CCUG 44338 / CIP 107171 / LMG 19424 / R1) (Ralstonia taiwanensis (strain LMG 19424)).